Consider the following 965-residue polypeptide: MNSAEVNVNPRVFGDSFVTFSGNGSGKFEMIDQAEAFLMELDSVAADTGSDGNGNVDLGSRVSNSETEPRFCEMKREIRDSDHRFYELCNESGEKKMEKRRVPDYKSFLSEFDDYVAREKMGSRNSKALSYGFEVGDMVWGKVKSHPWWPGQIFNEAFASPSVRRVKKMGYVLVAFFGDNSYGWFDPAELIPFEPHVKEKSQQTSSDHFAKAVEEAMNEVGRRSALGLTCKCRNQYNFRPINAQGYFAVDVPDYEVQAIYSSKQIQKARDSFSSVQTLAFVKRCALAPQECDTDSLKSFQKKVAVCAFRRAVFEEFDETYEQAFRARSVYCLMKTHEPLNRAPLRVPLSGSLVSAETLGNPKSYTKAMNVKDSTKQDKYLPKRREEAGDMTVQFGQVQESSQFQGINGSSAWDRLLQRRTPCLQTPRKHEQTGLVSMNFTSSSGNIPGKKSSVSKLSRDDDKGLAQESDVRMGEKATLFPDQEKFEPMKSLKQDETGTNSRSNKSSLKLFSGGKFSAGVGIKKGNVVKRSSGEMKSENCPPEPKKKKKEYVSELNRDTPDKRKALSSGEAWAKKSSQVDSAKRRSNMLIVKLDGLQLLSNLLALSLDPLFGSSDRSSFRVIRQFFFHFRSHVYQKSLATSPSATKLSKSAKTLCRANEQSKAGRNRISSDSQQDVPSTKKLKKTIQFKPLASDKKTNQDATKRSSLAPLNPVRDQCRVPINAKPAIVQQEKKTGPSAMVVEPTMLVMMFPPGESLPSIDLLKARFGRFGQLDQSAIRVSWKSSICRVGFLYKLDAQTALRYVSGSKSLFGNVNVTYFLRDMKASSASGDHELKKAKRPKTDKPITKPLNQLLEQAPPVHQPNIQLKSCLKKPGNNRNGNHRTVRVKFMLGEKETESPFSVSILPLSSQDSEPKPVNNQVDHVEPPLDPSQLKVDISLQMMELLTRCNDAVANVTGLLGYVPYHSL.

The region spanning Val-135–His-196 is the PWWP domain. Residues Met-437 to Lys-455 show a composition bias toward polar residues. 4 disordered regions span residues Met-437–Leu-507, Val-526–Gln-577, Ser-649–Pro-708, and Leu-905–Asp-927. 2 stretches are compositionally biased toward basic and acidic residues: residues Leu-456–Glu-474 and Asp-481–Glu-495. A compositionally biased stretch (polar residues) spans Thr-496–Leu-507. A Nuclear localization signal motif is present at residues Lys-546–Glu-553. Basic and acidic residues predominate over residues Glu-549–Lys-563. The segment covering Asn-657–Pro-676 has biased composition (polar residues). Positions Ala-691–Lys-702 are enriched in basic and acidic residues. Polar residues predominate over residues Leu-905–Val-919.

It belongs to the PDP family. As to quaternary structure, component of the PRC2 (polycomb repressive complex 2) complex which regulates histone methylation on histone H3K27.

The protein localises to the nucleus. In terms of biological role, may influence gene expression by regulating the function of the PRC2 complex and modulating H3K27me3 level. This chain is PWWP domain-containing protein 4, found in Arabidopsis thaliana (Mouse-ear cress).